Here is a 267-residue protein sequence, read N- to C-terminus: 27 kDa primary mesenchyme-specific spicule protein (267 aa).

The signal sequence occupies residues 1–16; it reads MKLLAILLVLPALCFG. Positions 20–64 are 11 X 4 AA tandem repeats of G-[PQ]-G-[MQ]; the sequence is EGPGMGPGMGPGMGPGMGPGMGPGMGPGMGPGMGPGQGQGQGQGQ. 11 consecutive repeat copies span residues 21–24, 25–28, 29–32, 33–36, 37–40, 41–44, 45–48, 49–52, 53–56, 57–60, and 61–64. Positions 44–68 are disordered; the sequence is MGPGMGPGMGPGQGQGQGQGQGQVG. In terms of domain architecture, C-type lectin spans 79-220; that stretch reads IGQQCFKMMS…CDEPMYFACS (142 aa). 2 cysteine pairs are disulfide-bonded: cysteine 100-cysteine 219 and cysteine 197-cysteine 211.

In terms of tissue distribution, expressed specifically in the micromere/primary mesenchyme cells (PMC) lineage. Produced uniformly and exclusively by PMCs through the early prism stage and this specificity is further restricted during skeletogenesis to a subpopulation of PMCs associated with the growing tips of the spicules.

The protein localises to the secreted. In terms of biological role, may play a role in the regulation or execution of skeletal growth. This is 27 kDa primary mesenchyme-specific spicule protein (PM27) from Strongylocentrotus purpuratus (Purple sea urchin).